Here is a 305-residue protein sequence, read N- to C-terminus: tRNA dimethylallyltransferase (305 aa).

Glycine 11–threonine 18 contacts ATP. Residue threonine 13 to threonine 18 participates in substrate binding. The tract at residues aspartate 36–glutamine 39 is interaction with substrate tRNA.

Belongs to the IPP transferase family. As to quaternary structure, monomer. Mg(2+) serves as cofactor.

It carries out the reaction adenosine(37) in tRNA + dimethylallyl diphosphate = N(6)-dimethylallyladenosine(37) in tRNA + diphosphate. Its function is as follows. Catalyzes the transfer of a dimethylallyl group onto the adenine at position 37 in tRNAs that read codons beginning with uridine, leading to the formation of N6-(dimethylallyl)adenosine (i(6)A). This is tRNA dimethylallyltransferase from Listeria monocytogenes serovar 1/2a (strain ATCC BAA-679 / EGD-e).